The following is a 559-amino-acid chain: Estrogen receptor beta (559 aa).

A modulating region spans residues 1 to 155 (MAVACSPEKD…SSGGKADLHF (155 aa)). The disordered stretch occupies residues 128-148 (TSSKSARRRSQENEEGEVSSG). NR C4-type zinc fingers lie at residues 156–176 (CAVC…CEGC) and 192–216 (CPAT…LHKC). The nuclear receptor DNA-binding region spans 156 to 221 (CAVCHDYASG…RLHKCYNVGM (66 aa)). Polar residues predominate over residues 243–254 (RLSSQGRTSGPS). The interval 243–269 (RLSSQGRTSGPSVLNGPAVGPLNTPQP) is disordered. Residues 273–509 (TSKQLIERIM…DLLLEMLDAH (237 aa)) enclose the NR LBD domain. Residues 514–559 (SRLPRRSPQQETVEQCDAPARPHSPGTSGPTNTWTPSCTGGRGEPQ) form a disordered region. A compositionally biased stretch (polar residues) spans 538–551 (PGTSGPTNTWTPSC).

This sequence belongs to the nuclear hormone receptor family. NR3 subfamily. As to quaternary structure, binds DNA as a homodimer. Can form a heterodimer with ER-alpha.

The protein resides in the nucleus. Binds estrogens with an affinity similar to that of ER-alpha, and activates expression of reporter genes containing estrogen response elements (ERE) in an estrogen-dependent manner. In Sparus aurata (Gilthead sea bream), this protein is Estrogen receptor beta (esr2).